The sequence spans 258 residues: Indole-3-glycerol phosphate synthase (258 aa).

It belongs to the TrpC family.

It catalyses the reaction 1-(2-carboxyphenylamino)-1-deoxy-D-ribulose 5-phosphate + H(+) = (1S,2R)-1-C-(indol-3-yl)glycerol 3-phosphate + CO2 + H2O. It participates in amino-acid biosynthesis; L-tryptophan biosynthesis; L-tryptophan from chorismate: step 4/5. This is Indole-3-glycerol phosphate synthase from Geobacillus thermodenitrificans (strain NG80-2).